A 309-amino-acid polypeptide reads, in one-letter code: Ribosomal RNA small subunit methyltransferase H (309 aa).

S-adenosyl-L-methionine is bound by residues 33-35 (GGH), aspartate 53, phenylalanine 79, aspartate 100, and glutamine 107.

It belongs to the methyltransferase superfamily. RsmH family.

The protein localises to the cytoplasm. The enzyme catalyses cytidine(1402) in 16S rRNA + S-adenosyl-L-methionine = N(4)-methylcytidine(1402) in 16S rRNA + S-adenosyl-L-homocysteine + H(+). In terms of biological role, specifically methylates the N4 position of cytidine in position 1402 (C1402) of 16S rRNA. The chain is Ribosomal RNA small subunit methyltransferase H from Clostridium botulinum (strain Loch Maree / Type A3).